The sequence spans 228 residues: E3 ubiquitin-protein ligase RNF114 (228 aa).

The RING-type zinc-finger motif lies at 29 to 68; the sequence is CPVCLEVYEKPVQVPCGHVFCSACLQECLKPKKPVCGVCR. Residues Cys91 and Cys94 each coordinate Zn(2+). The segment at 91–110 adopts a C2HC RNF-type zinc-finger fold; the sequence is CHGCRKNFFLSKIRAHVATC. Residue Lys102 is modified to N6-acetyllysine. Residues His106 and Cys110 each contribute to the Zn(2+) site. Residue Lys112 is modified to N6-acetyllysine.

Interacts with XAF1, the interaction increases XAF1 stability and proapoptotic effects, and may regulate IFN signaling. In terms of processing, autoubiquitinated. Polyubiquitinated in the presence of E2 enzymes UBE2D1, UBE2D2 and UBE2D3, but only monoubiquitinated in the presence of UBE2E1.

It localises to the cytoplasm. It is found in the nucleus. It catalyses the reaction S-ubiquitinyl-[E2 ubiquitin-conjugating enzyme]-L-cysteine + [acceptor protein]-L-lysine = [E2 ubiquitin-conjugating enzyme]-L-cysteine + N(6)-ubiquitinyl-[acceptor protein]-L-lysine.. Its pathway is protein modification; protein ubiquitination. E3 ubiquitin-protein ligase that promotes the ubiquitination of various substrates. In turn, participates in the regulation of many biological processes including cell cycle, apoptosis, osteoclastogenesis as well as innate or adaptive immunity. Acts as negative regulator of NF-kappa-B-dependent transcription by promoting the ubiquitination and stabilization of the NF-kappa-B inhibitor TNFAIP3. May promote the ubiquitination of TRAF6 as well. Also acts as a negative regulator of T-cell activation. Inhibits cellular dsRNA responses and interferon production by targeting MAVS component for proteasomal degradation. Ubiquitinates the CDK inhibitor CDKN1A leading to its degradationand probably also CDKN1B and CDKN1C. This activity stimulates cell cycle G1-to-S phase transition and suppresses cellular senescence. May play a role in spermatogenesis. Inhibits classical swine fever virus replication by mediating 'K27'-linked ubiquitination of viral NS4B and inducing its degradation via the proteasome. In Sus scrofa (Pig), this protein is E3 ubiquitin-protein ligase RNF114 (RNF114).